A 155-amino-acid chain; its full sequence is Small ribosomal subunit protein uS7 (155 aa).

Belongs to the universal ribosomal protein uS7 family. In terms of assembly, part of the 30S ribosomal subunit. Contacts proteins S9 and S11.

Functionally, one of the primary rRNA binding proteins, it binds directly to 16S rRNA where it nucleates assembly of the head domain of the 30S subunit. Is located at the subunit interface close to the decoding center, probably blocks exit of the E-site tRNA. The sequence is that of Small ribosomal subunit protein uS7 from Desulforapulum autotrophicum (strain ATCC 43914 / DSM 3382 / VKM B-1955 / HRM2) (Desulfobacterium autotrophicum).